The chain runs to 464 residues: Argininosuccinate lyase (464 aa).

It belongs to the lyase 1 family. Argininosuccinate lyase subfamily.

It is found in the cytoplasm. It catalyses the reaction 2-(N(omega)-L-arginino)succinate = fumarate + L-arginine. It functions in the pathway amino-acid biosynthesis; L-arginine biosynthesis; L-arginine from L-ornithine and carbamoyl phosphate: step 3/3. The polypeptide is Argininosuccinate lyase (Pseudomonas paraeruginosa (strain DSM 24068 / PA7) (Pseudomonas aeruginosa (strain PA7))).